Reading from the N-terminus, the 335-residue chain is Phosphate acyltransferase (335 aa).

It belongs to the PlsX family. As to quaternary structure, homodimer. Probably interacts with PlsY.

It is found in the cytoplasm. The enzyme catalyses a fatty acyl-[ACP] + phosphate = an acyl phosphate + holo-[ACP]. The protein operates within lipid metabolism; phospholipid metabolism. Functionally, catalyzes the reversible formation of acyl-phosphate (acyl-PO(4)) from acyl-[acyl-carrier-protein] (acyl-ACP). This enzyme utilizes acyl-ACP as fatty acyl donor, but not acyl-CoA. The polypeptide is Phosphate acyltransferase (Desulforudis audaxviator (strain MP104C)).